A 214-amino-acid chain; its full sequence is Phosphatidylserine decarboxylase proenzyme (214 aa).

Ser182 (schiff-base intermediate with substrate; via pyruvic acid) is an active-site residue. Position 182 is a pyruvic acid (Ser); by autocatalysis (Ser182).

It belongs to the phosphatidylserine decarboxylase family. PSD-A subfamily. Heterodimer of a large membrane-associated beta subunit and a small pyruvoyl-containing alpha subunit. The cofactor is pyruvate. In terms of processing, is synthesized initially as an inactive proenzyme. Formation of the active enzyme involves a self-maturation process in which the active site pyruvoyl group is generated from an internal serine residue via an autocatalytic post-translational modification. Two non-identical subunits are generated from the proenzyme in this reaction, and the pyruvate is formed at the N-terminus of the alpha chain, which is derived from the carboxyl end of the proenzyme. The post-translation cleavage follows an unusual pathway, termed non-hydrolytic serinolysis, in which the side chain hydroxyl group of the serine supplies its oxygen atom to form the C-terminus of the beta chain, while the remainder of the serine residue undergoes an oxidative deamination to produce ammonia and the pyruvoyl prosthetic group on the alpha chain.

It localises to the cell membrane. It carries out the reaction a 1,2-diacyl-sn-glycero-3-phospho-L-serine + H(+) = a 1,2-diacyl-sn-glycero-3-phosphoethanolamine + CO2. Its pathway is phospholipid metabolism; phosphatidylethanolamine biosynthesis; phosphatidylethanolamine from CDP-diacylglycerol: step 2/2. In terms of biological role, catalyzes the formation of phosphatidylethanolamine (PtdEtn) from phosphatidylserine (PtdSer). This chain is Phosphatidylserine decarboxylase proenzyme, found in Burkholderia lata (strain ATCC 17760 / DSM 23089 / LMG 22485 / NCIMB 9086 / R18194 / 383).